The following is a 110-amino-acid chain: Thiosulfate sulfurtransferase GlpE (110 aa).

The 89-residue stretch at 17 to 105 (KQEGAVVVDI…WRATYPAETA (89 aa)) folds into the Rhodanese domain. Cys65 (cysteine persulfide intermediate) is an active-site residue.

The protein belongs to the GlpE family.

The protein localises to the cytoplasm. It carries out the reaction thiosulfate + hydrogen cyanide = thiocyanate + sulfite + 2 H(+). It catalyses the reaction thiosulfate + [thioredoxin]-dithiol = [thioredoxin]-disulfide + hydrogen sulfide + sulfite + 2 H(+). Its function is as follows. Transferase that catalyzes the transfer of sulfur from thiosulfate to thiophilic acceptors such as cyanide or dithiols. May function in a CysM-independent thiosulfate assimilation pathway by catalyzing the conversion of thiosulfate to sulfite, which can then be used for L-cysteine biosynthesis. The sequence is that of Thiosulfate sulfurtransferase GlpE from Pseudomonas putida (strain GB-1).